A 211-amino-acid chain; its full sequence is Dof zinc finger protein 5 (211 aa).

The segment at 37 to 101 (FVVAREKVEP…QRRLQDSAEA (65 aa)) is disordered. The segment covering 68 to 80 (IKREAADRDEEQR) has biased composition (basic and acidic residues). Residues 109 to 163 (LPCPRCRSRDTKFCYFNNYNVNQPRHFCKACHRYWTAGGALRNVPVGAGRRKNRP) form a Dof-type zinc finger. Zn(2+)-binding residues include Cys-111, Cys-114, Cys-136, and Cys-139. Residues 191 to 211 (SPTSPSPVYTDRWPVTPDRPF) are disordered.

Its subcellular location is the nucleus. Functionally, transcription factor that may transactivate seed storage protein genes in developing seeds. This Oryza sativa subsp. japonica (Rice) protein is Dof zinc finger protein 5.